We begin with the raw amino-acid sequence, 660 residues long: Replication restart protein PriA (660 aa).

Residues 145-313 (IIGSEKTNVF…KNNQIKKIIM (169 aa)) form the Helicase ATP-binding domain. An ATP-binding site is contributed by 158–165 (GIPGSGKT). The DEAH box signature appears at 256–259 (DEEH). Cys-370, Cys-373, Cys-379, Cys-382, Cys-397, Cys-400, Cys-410, and Cys-413 together coordinate Zn(2+). One can recognise a Helicase C-terminal domain in the interval 405–557 (KTASHCPQCE…QFYEEELDIR (153 aa)).

It belongs to the helicase family. PriA subfamily. As to quaternary structure, component of the replication restart primosome. Requires Zn(2+) as cofactor.

The enzyme catalyses Couples ATP hydrolysis with the unwinding of duplex DNA by translocating in the 3'-5' direction.. The catalysed reaction is ATP + H2O = ADP + phosphate + H(+). Its function is as follows. Initiates the restart of stalled replication forks, which reloads the replicative helicase on sites other than the origin of replication. Recognizes and binds to abandoned replication forks and remodels them to uncover a helicase loading site. Promotes assembly of the primosome at these replication forks. This Borreliella burgdorferi (strain ATCC 35210 / DSM 4680 / CIP 102532 / B31) (Borrelia burgdorferi) protein is Replication restart protein PriA.